We begin with the raw amino-acid sequence, 439 residues long: Keratin, type I cytoskeletal 40 (439 aa).

Residues 1-89 are head; it reads MASDGSPSCC…CEEGSFNSNE (89 aa). In terms of domain architecture, IF rod spans 89–400; that stretch reads EKETMQFLND…GLLEKEDSRL (312 aa). The segment at 90–124 is coil 1A; that stretch reads KETMQFLNDRLASYLERVRSLEENNAELECRIREQ. Residues 125–135 form a linker 1 region; it reads CEPNAPLVCPD. The interval 136–236 is coil 1B; the sequence is YQRYFDTIEE…HEEEVNLLRE (101 aa). Residues 237 to 252 are linker 12; that stretch reads QLGDRLSVELDTAPTV. Residues 253 to 396 form a coil 2 region; that stretch reads DLNKVLDEMR…NTYRGLLEKE (144 aa). The tail stretch occupies residues 397-439; that stretch reads DSRLPCNPGSGAPMPNSTCEPCSNSMCEPCSAYVICTVENCCA.

The protein belongs to the intermediate filament family. As to quaternary structure, heterotetramer of two type I and two type II keratins.

In terms of biological role, may play a role in late hair differentiation. In Mus musculus (Mouse), this protein is Keratin, type I cytoskeletal 40 (Krt40).